Consider the following 130-residue polypeptide: Small ribosomal subunit protein uS9 (130 aa).

It belongs to the universal ribosomal protein uS9 family.

In Burkholderia pseudomallei (strain K96243), this protein is Small ribosomal subunit protein uS9.